Consider the following 961-residue polypeptide: Phosphofurin acidic cluster sorting protein 1 (961 aa).

The span at 1–19 shows a compositional bias: gly residues; that stretch reads MAERGGAGGGPGGAGGGSS. Disordered stretches follow at residues 1–70 and 76–95; these read MAER…SSST and VAVASGSAPPGGPGPGRTPA. A2 is modified (N-acetylalanine). A compositionally biased stretch (low complexity) spans 20 to 30; that stretch reads QRGSGVAQSPQ. Position 28 is a phosphoserine (S28). Pro residues predominate over residues 31–46; that stretch reads QQPPQQPSQPQQPTPP. T44 is subject to Phosphothreonine. Low complexity predominate over residues 51–70; it reads ATSSSSSTSAAAASSSSSST. Phosphotyrosine is present on Y249. Positions 260-271 are enriched in basic and acidic residues; that stretch reads GIKSKLSDRSPD. 2 disordered regions span residues 260–297 and 375–426; these read GIKSKLSDRSPDIDNYSEEEEESFSSEQEGSDDPLHGQ and NPSD…GKDT. Residues 274-291 are compositionally biased toward acidic residues; it reads NYSEEEEESFSSEQEGSD. A coiled-coil region spans residues 351-375; the sequence is HVSREQIREVEEDLDELYDSLEMYN. Phosphoserine occurs at positions 377 and 379. Polar residues predominate over residues 404 to 426; sequence MSQSSSQTEIGSLNSKGSLGKDT. Residues S428 and S493 each carry the phosphoserine modification. 2 disordered regions span residues 475-540 and 758-802; these read EKVK…HSTQ and SPST…SMSS. T502 is subject to Phosphothreonine. A phosphoserine mark is found at S517, S526, S527, S529, and S532. Residues 768–802 are compositionally biased toward low complexity; it reads SPVVSLTVPSTSPPSSSGLSRDATATPPSSPSMSS.

It belongs to the PACS family. In terms of assembly, associates with AP-1 and AP-3 but not with AP-2 complexes. Interacts with FURIN. Forms a ternary complex with furin and AP-1. Interacts with PKD2 (via acidic region). Interacts with SORL1. Interacts with WDR37.

Its subcellular location is the golgi apparatus. The protein resides in the trans-Golgi network. Coat protein that is involved in the localization of trans-Golgi network (TGN) membrane proteins that contain acidic cluster sorting motifs. Controls the endosome-to-Golgi trafficking of furin and mannose-6-phosphate receptor by connecting the acidic-cluster-containing cytoplasmic domain of these molecules with the adapter-protein complex-1 (AP-1) of endosomal clathrin-coated membrane pits. Required for normal ER Ca2+ handling in lymphocytes. Together with WDR37, it plays an essential role in lymphocyte development, quiescence and survival. Required for stabilizing peripheral lymphocyte populations. The chain is Phosphofurin acidic cluster sorting protein 1 (Pacs1) from Rattus norvegicus (Rat).